Reading from the N-terminus, the 435-residue chain is Serine--tRNA ligase (435 aa).

238–240 serves as a coordination point for L-serine; it reads TAE. Position 269–271 (269–271) interacts with ATP; sequence RAE. E292 contributes to the L-serine binding site. Residue 356 to 359 participates in ATP binding; sequence EISS. Residue S392 coordinates L-serine.

This sequence belongs to the class-II aminoacyl-tRNA synthetase family. Type-1 seryl-tRNA synthetase subfamily. In terms of assembly, homodimer. The tRNA molecule binds across the dimer.

The protein localises to the cytoplasm. The enzyme catalyses tRNA(Ser) + L-serine + ATP = L-seryl-tRNA(Ser) + AMP + diphosphate + H(+). It catalyses the reaction tRNA(Sec) + L-serine + ATP = L-seryl-tRNA(Sec) + AMP + diphosphate + H(+). The protein operates within aminoacyl-tRNA biosynthesis; selenocysteinyl-tRNA(Sec) biosynthesis; L-seryl-tRNA(Sec) from L-serine and tRNA(Sec): step 1/1. Its function is as follows. Catalyzes the attachment of serine to tRNA(Ser). Is also able to aminoacylate tRNA(Sec) with serine, to form the misacylated tRNA L-seryl-tRNA(Sec), which will be further converted into selenocysteinyl-tRNA(Sec). In Methylobacterium sp. (strain 4-46), this protein is Serine--tRNA ligase.